The chain runs to 380 residues: Epoxyqueuosine reductase (380 aa).

Asp134 functions as the Proton donor in the catalytic mechanism. Positions 178 to 208 (FPPDKPIEDQCGGCTKCIDICPTGALIQGGQ) constitute a 4Fe-4S ferredoxin-type 1 domain. Residues Cys188, Cys191, Cys194, Cys198, Cys214, Cys240, Cys243, and Cys247 each contribute to the [4Fe-4S] cluster site. A 4Fe-4S ferredoxin-type 2 domain is found at 226–258 (PEEYRDKIGNRIYGCDTCQTVCPKNKGMDFHNH).

It belongs to the QueG family. Monomer. Cob(II)alamin is required as a cofactor. Requires [4Fe-4S] cluster as cofactor.

Its subcellular location is the cytoplasm. It carries out the reaction epoxyqueuosine(34) in tRNA + AH2 = queuosine(34) in tRNA + A + H2O. It participates in tRNA modification; tRNA-queuosine biosynthesis. In terms of biological role, catalyzes the conversion of epoxyqueuosine (oQ) to queuosine (Q), which is a hypermodified base found in the wobble positions of tRNA(Asp), tRNA(Asn), tRNA(His) and tRNA(Tyr). This Bacillus cereus (strain ATCC 14579 / DSM 31 / CCUG 7414 / JCM 2152 / NBRC 15305 / NCIMB 9373 / NCTC 2599 / NRRL B-3711) protein is Epoxyqueuosine reductase.